A 936-amino-acid polypeptide reads, in one-letter code: Protocadherin gamma-A10 (936 aa).

An N-terminal signal peptide occupies residues 1–32 (MAAQRNRSKESKDCSGLVLLCLFFGIPWEAGA). 6 Cadherin domains span residues 33 to 137 (RQIS…APKF), 138 to 246 (QAEN…APVF), 247 to 351 (TLPE…SPEL), 352 to 456 (TITS…PPTF), 457 to 566 (SQVS…APEI), and 574 to 687 (DGST…SPAN). Over 33–696 (RQISYSIPEE…NSETSDLTLY (664 aa)) the chain is Extracellular. N-linked (GlcNAc...) asparagine glycosylation is present at Asn-51. N-linked (GlcNAc...) asparagine glycosylation is found at Asn-423 and Asn-549. The chain crosses the membrane as a helical span at residues 697-717 (LVVAVAAVSCVFLAFVIVLLA). Topologically, residues 718 to 936 (HRLRRWHKSR…KKKSGKKEKK (219 aa)) are cytoplasmic. Disordered regions lie at residues 806 to 845 (EDTPLVPQAPPNTDWRFSQAQRPGTSGSQNGDDTGTWPNN) and 906 to 936 (ATLTNAAGKRDGKAPAGGNGNKKKSGKKEKK). A compositionally biased stretch (polar residues) spans 820–845 (WRFSQAQRPGTSGSQNGDDTGTWPNN). The span at 926 to 936 (NKKKSGKKEKK) shows a compositional bias: basic residues.

It is found in the cell membrane. Functionally, potential calcium-dependent cell-adhesion protein. May be involved in the establishment and maintenance of specific neuronal connections in the brain. The polypeptide is Protocadherin gamma-A10 (PCDHGA10) (Homo sapiens (Human)).